The sequence spans 68 residues: Amphipathic peptide CT1 (68 aa).

The first 23 residues, 1 to 23 (MKTQIVILIVAVLFLQLVSQSDA), serve as a signal peptide directing secretion. Leucine 36 carries the leucine amide modification. Residues 40-68 (GLKNLDQYNDLFDGEISDADIKFLKDLMR) constitute a propeptide that is removed on maturation.

Belongs to the non-disulfide-bridged peptide (NDBP) superfamily. Short antimicrobial peptide (group 4) family. In terms of tissue distribution, expressed by the venom gland.

The protein localises to the secreted. The protein resides in the target cell membrane. Functionally, amphipathic peptide that shows no antibacterial activity even at 50 uM but shows a low hemolytic activity against human erythrocytes. This is Amphipathic peptide CT1 from Mesomexovis subcristatus (Scorpion).